The primary structure comprises 460 residues: uncharacterized protein (460 aa).

This sequence to yeast YGL164c.

This is an uncharacterized protein from Schizosaccharomyces pombe (strain 972 / ATCC 24843) (Fission yeast).